The following is a 188-amino-acid chain: dCTP deaminase (188 aa).

Residues 111–116 (KSTYAR), 135–137 (TLE), Gln-156, Tyr-170, Lys-179, and Gln-180 each bind dCTP. Glu-137 serves as the catalytic Proton donor/acceptor.

The protein belongs to the dCTP deaminase family. Homotrimer.

The catalysed reaction is dCTP + H2O + H(+) = dUTP + NH4(+). It participates in pyrimidine metabolism; dUMP biosynthesis; dUMP from dCTP (dUTP route): step 1/2. Its function is as follows. Catalyzes the deamination of dCTP to dUTP. This Rickettsia canadensis (strain McKiel) protein is dCTP deaminase.